A 145-amino-acid polypeptide reads, in one-letter code: uncharacterized protein (145 aa).

This is an uncharacterized protein from Rhizobium radiobacter (Agrobacterium tumefaciens).